We begin with the raw amino-acid sequence, 88 residues long: Cell division topological specificity factor (88 aa).

The protein belongs to the MinE family.

Prevents the cell division inhibition by proteins MinC and MinD at internal division sites while permitting inhibition at polar sites. This ensures cell division at the proper site by restricting the formation of a division septum at the midpoint of the long axis of the cell. The protein is Cell division topological specificity factor of Aeromonas hydrophila subsp. hydrophila (strain ATCC 7966 / DSM 30187 / BCRC 13018 / CCUG 14551 / JCM 1027 / KCTC 2358 / NCIMB 9240 / NCTC 8049).